We begin with the raw amino-acid sequence, 411 residues long: Peptide chain release factor subunit 1 (411 aa).

Belongs to the eukaryotic release factor 1 family. As to quaternary structure, heterodimer of two subunits, one of which binds GTP.

It is found in the cytoplasm. Directs the termination of nascent peptide synthesis (translation) in response to the termination codons UAA, UAG and UGA. In Methanosphaera stadtmanae (strain ATCC 43021 / DSM 3091 / JCM 11832 / MCB-3), this protein is Peptide chain release factor subunit 1.